Here is a 276-residue protein sequence, read N- to C-terminus: NH(3)-dependent NAD(+) synthetase (276 aa).

43–50 (GISGGVDS) provides a ligand contact to ATP. Aspartate 49 is a binding site for Mg(2+). Arginine 146 is a deamido-NAD(+) binding site. Threonine 166 is an ATP binding site. Glutamate 171 is a Mg(2+) binding site. Residues lysine 179 and aspartate 186 each coordinate deamido-NAD(+). Residues lysine 195 and threonine 217 each contribute to the ATP site. 266 to 267 (HK) serves as a coordination point for deamido-NAD(+).

The protein belongs to the NAD synthetase family. In terms of assembly, homodimer.

It carries out the reaction deamido-NAD(+) + NH4(+) + ATP = AMP + diphosphate + NAD(+) + H(+). Its pathway is cofactor biosynthesis; NAD(+) biosynthesis; NAD(+) from deamido-NAD(+) (ammonia route): step 1/1. Functionally, catalyzes the ATP-dependent amidation of deamido-NAD to form NAD. Uses ammonia as a nitrogen source. This is NH(3)-dependent NAD(+) synthetase from Shewanella pealeana (strain ATCC 700345 / ANG-SQ1).